The primary structure comprises 602 residues: Elongation factor 4 (602 aa).

The region spanning Asp-6–Lys-188 is the tr-type G domain. GTP is bound by residues Asp-18 to Thr-23 and Asn-135 to Asp-138.

This sequence belongs to the TRAFAC class translation factor GTPase superfamily. Classic translation factor GTPase family. LepA subfamily.

The protein resides in the cell inner membrane. It carries out the reaction GTP + H2O = GDP + phosphate + H(+). Its function is as follows. Required for accurate and efficient protein synthesis under certain stress conditions. May act as a fidelity factor of the translation reaction, by catalyzing a one-codon backward translocation of tRNAs on improperly translocated ribosomes. Back-translocation proceeds from a post-translocation (POST) complex to a pre-translocation (PRE) complex, thus giving elongation factor G a second chance to translocate the tRNAs correctly. Binds to ribosomes in a GTP-dependent manner. This is Elongation factor 4 from Brucella abortus (strain 2308).